The following is a 308-amino-acid chain: HPr kinase/phosphorylase (308 aa).

Catalysis depends on residues H141 and K162. G156–S163 provides a ligand contact to ATP. Position 163 (S163) interacts with Mg(2+). D180 serves as the catalytic Proton acceptor; for phosphorylation activity. Proton donor; for dephosphorylation activity. The important for the catalytic mechanism of both phosphorylation and dephosphorylation stretch occupies residues M204 to D213. E205 is a Mg(2+) binding site. The active site involves R246. An important for the catalytic mechanism of dephosphorylation region spans residues P267–R272.

This sequence belongs to the HPrK/P family. Homohexamer. Mg(2+) serves as cofactor.

The enzyme catalyses [HPr protein]-L-serine + ATP = [HPr protein]-O-phospho-L-serine + ADP + H(+). It carries out the reaction [HPr protein]-O-phospho-L-serine + phosphate + H(+) = [HPr protein]-L-serine + diphosphate. In terms of biological role, catalyzes the ATP- as well as the pyrophosphate-dependent phosphorylation of a specific serine residue in HPr, a phosphocarrier protein of the phosphoenolpyruvate-dependent sugar phosphotransferase system (PTS). HprK/P also catalyzes the pyrophosphate-producing, inorganic phosphate-dependent dephosphorylation (phosphorolysis) of seryl-phosphorylated HPr (P-Ser-HPr). The two antagonistic activities of HprK/P are regulated by several intracellular metabolites, which change their concentration in response to the absence or presence of rapidly metabolisable carbon sources (glucose, fructose, etc.) in the growth medium. Therefore, by controlling the phosphorylation state of HPr, HPrK/P is a sensor enzyme that plays a major role in the regulation of carbon metabolism and sugar transport: it mediates carbon catabolite repression (CCR), and regulates PTS-catalyzed carbohydrate uptake and inducer exclusion. The polypeptide is HPr kinase/phosphorylase (Peptoclostridium acidaminophilum (Eubacterium acidaminophilum)).